Here is a 274-residue protein sequence, read N- to C-terminus: Large ribosomal subunit protein uL2 (274 aa).

The disordered stretch occupies residues alanine 224–tyrosine 256. Residues aspartate 229–valine 246 are compositionally biased toward basic and acidic residues.

It belongs to the universal ribosomal protein uL2 family. As to quaternary structure, part of the 50S ribosomal subunit. Forms a bridge to the 30S subunit in the 70S ribosome.

Its function is as follows. One of the primary rRNA binding proteins. Required for association of the 30S and 50S subunits to form the 70S ribosome, for tRNA binding and peptide bond formation. It has been suggested to have peptidyltransferase activity; this is somewhat controversial. Makes several contacts with the 16S rRNA in the 70S ribosome. This chain is Large ribosomal subunit protein uL2, found in Acidovorax sp. (strain JS42).